Consider the following 211-residue polypeptide: Probable nicotinate-nucleotide adenylyltransferase (211 aa).

Belongs to the NadD family.

It carries out the reaction nicotinate beta-D-ribonucleotide + ATP + H(+) = deamido-NAD(+) + diphosphate. It functions in the pathway cofactor biosynthesis; NAD(+) biosynthesis; deamido-NAD(+) from nicotinate D-ribonucleotide: step 1/1. Its function is as follows. Catalyzes the reversible adenylation of nicotinate mononucleotide (NaMN) to nicotinic acid adenine dinucleotide (NaAD). The chain is Probable nicotinate-nucleotide adenylyltransferase from Legionella pneumophila (strain Lens).